The primary structure comprises 68 residues: MTKATDIRTKTPDELNDMLLELKREQLNLRFQRATGQQENTSQIRKARRDVARVKTIQAERARAAAKA.

Belongs to the universal ribosomal protein uL29 family.

The sequence is that of Large ribosomal subunit protein uL29 from Acidiphilium cryptum (strain JF-5).